We begin with the raw amino-acid sequence, 205 residues long: Type-4 uracil-DNA glycosylase (205 aa).

2 residues coordinate [4Fe-4S] cluster: C13 and C16. Residues 40–42 (GEG), F54, and N80 each bind uracil. The [4Fe-4S] cluster site is built by C84 and C100. A uracil-binding site is contributed by H155.

This sequence belongs to the uracil-DNA glycosylase (UDG) superfamily. Type 4 (UDGa) family. As to quaternary structure, monomer.

The enzyme catalyses Hydrolyzes single-stranded DNA or mismatched double-stranded DNA and polynucleotides, releasing free uracil.. With respect to regulation, product-inhibited by apurinic/apyrimidinic sites. Its function is as follows. Removes uracil bases that are present in DNA as a result of either deamination of cytosine or misincorporation of dUMP instead of dTMP. Can remove uracil from double-stranded DNA containing either a U/G, U/A, U/C or U/T base pair as well as from single-stranded DNA. Specifically recognizes uracil that is flipped out from double-stranded DNA. The chain is Type-4 uracil-DNA glycosylase from Thermus thermophilus (strain ATCC 27634 / DSM 579 / HB8).